A 614-amino-acid chain; its full sequence is uncharacterized protein (614 aa).

Helical transmembrane passes span 41–61 (GWIF…AVLF), 87–107 (LIGM…ASAV), 157–177 (DTVL…ITSG), and 178–198 (VVLV…IILF). Residues 43–330 (IFLLAILTVG…IMWESARLFE (288 aa)) enclose the ABC transmembrane type-1 domain. In terms of domain architecture, ABC transporter spans 364-603 (IKFNDITFAY…NGLYAKLWNH (240 aa)). ATP is bound at residue 397 to 404 (GRSGAGKS).

Belongs to the ABC transporter superfamily.

The protein localises to the cell membrane. This is an uncharacterized protein from Haemophilus influenzae (strain ATCC 51907 / DSM 11121 / KW20 / Rd).